The chain runs to 240 residues: Proteasome subunit alpha (240 aa).

Belongs to the peptidase T1A family. As to quaternary structure, the 20S proteasome core is composed of 14 alpha and 14 beta subunits that assemble into four stacked heptameric rings, resulting in a barrel-shaped structure. The two inner rings, each composed of seven catalytic beta subunits, are sandwiched by two outer rings, each composed of seven alpha subunits. The catalytic chamber with the active sites is on the inside of the barrel. Has a gated structure, the ends of the cylinder being occluded by the N-termini of the alpha-subunits. Is capped at one or both ends by the proteasome regulatory ATPase, PAN.

The protein resides in the cytoplasm. Its activity is regulated as follows. The formation of the proteasomal ATPase PAN-20S proteasome complex, via the docking of the C-termini of PAN into the intersubunit pockets in the alpha-rings, triggers opening of the gate for substrate entry. Interconversion between the open-gate and close-gate conformations leads to a dynamic regulation of the 20S proteasome proteolysis activity. In terms of biological role, component of the proteasome core, a large protease complex with broad specificity involved in protein degradation. The protein is Proteasome subunit alpha of Methanoregula boonei (strain DSM 21154 / JCM 14090 / 6A8).